We begin with the raw amino-acid sequence, 259 residues long: Aspartate/glutamate leucyltransferase (259 aa).

It belongs to the R-transferase family. Bpt subfamily.

Its subcellular location is the cytoplasm. The catalysed reaction is N-terminal L-glutamyl-[protein] + L-leucyl-tRNA(Leu) = N-terminal L-leucyl-L-glutamyl-[protein] + tRNA(Leu) + H(+). It carries out the reaction N-terminal L-aspartyl-[protein] + L-leucyl-tRNA(Leu) = N-terminal L-leucyl-L-aspartyl-[protein] + tRNA(Leu) + H(+). Functionally, functions in the N-end rule pathway of protein degradation where it conjugates Leu from its aminoacyl-tRNA to the N-termini of proteins containing an N-terminal aspartate or glutamate. The protein is Aspartate/glutamate leucyltransferase of Rhizobium meliloti (strain 1021) (Ensifer meliloti).